The primary structure comprises 1054 residues: Leucine-rich repeats and immunoglobulin-like domains protein 2 (1054 aa).

The signal sequence occupies residues Met1–Ala39. An LRRNT domain is found at Gly40 to Ser74. 15 LRR repeats span residues Asp75–Gln96, Thr97–Thr118, Asn120–Leu141, Ala144–Arg165, Ser167–Asn188, Ser192–Leu213, His215–Gly236, Ser239–Gly260, Asn263–Gly284, Met287–Phe308, Arg311–Gly332, Leu335–Phe356, Asn359–Phe381, Ser386–Gly407, and Ser410–Gln431. A glycan (N-linked (GlcNAc...) asparagine) is linked at Asn90. Asn120 is a glycosylation site (N-linked (GlcNAc...) asparagine). Residues Asn172 and Asn188 are each glycosylated (N-linked (GlcNAc...) asparagine). Asn273 carries N-linked (GlcNAc...) asparagine glycosylation. N-linked (GlcNAc...) asparagine glycans are attached at residues Asn440, Asn467, Asn513, Asn570, and Asn588. An LRRCT domain is found at Ser442–Asp493. Ig-like C2-type domains follow at residues Pro497 to Thr596, Pro601 to Thr690, and Pro695 to Ser784. Cys518 and Cys579 are disulfide-bonded. A disulfide bridge connects residues Cys622 and Cys674. N-linked (GlcNAc...) asparagine glycans are attached at residues Asn686 and Asn727. An intrachain disulfide couples Cys716 to Cys765. The chain crosses the membrane as a helical span at residues Ile807–Ile827. Tyr905 carries the phosphotyrosine modification. Asn1024 is a glycosylation site (N-linked (GlcNAc...) asparagine).

It is found in the cell membrane. The protein localises to the cytoplasm. The polypeptide is Leucine-rich repeats and immunoglobulin-like domains protein 2 (Lrig2) (Mus musculus (Mouse)).